The sequence spans 181 residues: Ribosome-recycling factor (181 aa).

The segment at 135-160 (MDDIKKDKDMPEDDARKAEDQTQKLT) is disordered.

Belongs to the RRF family.

It localises to the cytoplasm. Its function is as follows. Responsible for the release of ribosomes from messenger RNA at the termination of protein biosynthesis. May increase the efficiency of translation by recycling ribosomes from one round of translation to another. This chain is Ribosome-recycling factor, found in Leuconostoc mesenteroides subsp. mesenteroides (strain ATCC 8293 / DSM 20343 / BCRC 11652 / CCM 1803 / JCM 6124 / NCDO 523 / NBRC 100496 / NCIMB 8023 / NCTC 12954 / NRRL B-1118 / 37Y).